Consider the following 318-residue polypeptide: Malonyl-S-ACP:biotin-protein carboxyltransferase MADC (318 aa).

The 256-residue stretch at 2 to 257 (AKWTELQDKS…VLQKPMEEIE (256 aa)) folds into the CoA carboxyltransferase N-terminal domain.

Its subcellular location is the cytoplasm. The catalysed reaction is N(6)-biotinyl-L-lysyl-[protein] + malonyl-[ACP] = N(6)-carboxybiotinyl-L-lysyl-[protein] + acetyl-[ACP]. In terms of biological role, gamma subunit of the biotin-dependent malonate decarboxylase multienzyme complex (EC 7.2.4.4). The two subunits MADC and MADD are required for the transfer of the malonate carboxy group from the acyl-carrier protein (ACP) to the prosthetic group of the biotin carrier MADF. Required for the regeneration of ACP. This Malonomonas rubra protein is Malonyl-S-ACP:biotin-protein carboxyltransferase MADC (madC).